The chain runs to 40 residues: Photosystem II reaction center protein J (40 aa).

Residues 8–28 traverse the membrane as a helical segment; the sequence is IPLWIIGTVAGILVIGLVGVF.

The protein belongs to the PsbJ family. PSII is composed of 1 copy each of membrane proteins PsbA, PsbB, PsbC, PsbD, PsbE, PsbF, PsbH, PsbI, PsbJ, PsbK, PsbL, PsbM, PsbT, PsbX, PsbY, PsbZ, Psb30/Ycf12, at least 3 peripheral proteins of the oxygen-evolving complex and a large number of cofactors. It forms dimeric complexes.

It is found in the plastid. The protein localises to the chloroplast thylakoid membrane. One of the components of the core complex of photosystem II (PSII). PSII is a light-driven water:plastoquinone oxidoreductase that uses light energy to abstract electrons from H(2)O, generating O(2) and a proton gradient subsequently used for ATP formation. It consists of a core antenna complex that captures photons, and an electron transfer chain that converts photonic excitation into a charge separation. In Helianthus annuus (Common sunflower), this protein is Photosystem II reaction center protein J.